Reading from the N-terminus, the 436-residue chain is GTPase Der (436 aa).

EngA-type G domains lie at 4 to 167 (PIVA…GEEE) and 176 to 351 (IRLS…ENHK). Residues 10–17 (GRPNVGKS), 57–61 (DTGGI), 119–122 (NKVD), 182–189 (GRPNVGKS), 229–233 (DTAGM), and 294–297 (NKWD) each bind GTP. A KH-like domain is found at 352 to 436 (KRVQSSTLNE…PIHIIARKRN (85 aa)).

It belongs to the TRAFAC class TrmE-Era-EngA-EngB-Septin-like GTPase superfamily. EngA (Der) GTPase family. As to quaternary structure, associates with the 50S ribosomal subunit.

Its function is as follows. GTPase that plays an essential role in the late steps of ribosome biogenesis. This is GTPase Der from Staphylococcus aureus (strain Mu3 / ATCC 700698).